The sequence spans 218 residues: Elongation factor Ts (218 aa).

The interval 82–85 (TDFV) is involved in Mg(2+) ion dislocation from EF-Tu.

This sequence belongs to the EF-Ts family.

The protein localises to the cytoplasm. Functionally, associates with the EF-Tu.GDP complex and induces the exchange of GDP to GTP. It remains bound to the aminoacyl-tRNA.EF-Tu.GTP complex up to the GTP hydrolysis stage on the ribosome. The protein is Elongation factor Ts of Prochlorococcus marinus (strain MIT 9211).